Here is a 208-residue protein sequence, read N- to C-terminus: ATP-dependent Clp protease proteolytic subunit 1 (208 aa).

S108 (nucleophile) is an active-site residue. H133 is an active-site residue.

It belongs to the peptidase S14 family. In terms of assembly, fourteen ClpP subunits assemble into 2 heptameric rings which stack back to back to give a disk-like structure with a central cavity, resembling the structure of eukaryotic proteasomes.

Its subcellular location is the cytoplasm. The catalysed reaction is Hydrolysis of proteins to small peptides in the presence of ATP and magnesium. alpha-casein is the usual test substrate. In the absence of ATP, only oligopeptides shorter than five residues are hydrolyzed (such as succinyl-Leu-Tyr-|-NHMec, and Leu-Tyr-Leu-|-Tyr-Trp, in which cleavage of the -Tyr-|-Leu- and -Tyr-|-Trp bonds also occurs).. In terms of biological role, cleaves peptides in various proteins in a process that requires ATP hydrolysis. Has a chymotrypsin-like activity. Plays a major role in the degradation of misfolded proteins. The chain is ATP-dependent Clp protease proteolytic subunit 1 from Corynebacterium efficiens (strain DSM 44549 / YS-314 / AJ 12310 / JCM 11189 / NBRC 100395).